The primary structure comprises 181 residues: Probable chemoreceptor glutamine deamidase CheD (181 aa).

This sequence belongs to the CheD family.

The enzyme catalyses L-glutaminyl-[protein] + H2O = L-glutamyl-[protein] + NH4(+). Functionally, probably deamidates glutamine residues to glutamate on methyl-accepting chemotaxis receptors (MCPs), playing an important role in chemotaxis. This Agrobacterium fabrum (strain C58 / ATCC 33970) (Agrobacterium tumefaciens (strain C58)) protein is Probable chemoreceptor glutamine deamidase CheD.